Reading from the N-terminus, the 165-residue chain is Transcription antitermination protein NusB (165 aa).

It belongs to the NusB family.

Functionally, involved in transcription antitermination. Required for transcription of ribosomal RNA (rRNA) genes. Binds specifically to the boxA antiterminator sequence of the ribosomal RNA (rrn) operons. This Bradyrhizobium diazoefficiens (strain JCM 10833 / BCRC 13528 / IAM 13628 / NBRC 14792 / USDA 110) protein is Transcription antitermination protein NusB.